The primary structure comprises 393 residues: Elongation factor Tu (393 aa).

The 194-residue stretch at 10–203 folds into the tr-type G domain; that stretch reads KPHVNIGTIG…AVDNYIPTPV (194 aa). A G1 region spans residues 19-26; it reads GHVDHGKT. 19-26 lines the GTP pocket; the sequence is GHVDHGKT. Thr-26 is a binding site for Mg(2+). A G2 region spans residues 60–64; sequence GITIS. The segment at 81–84 is G3; the sequence is DCPG. Residues 81 to 85 and 136 to 139 contribute to the GTP site; these read DCPGH and NKVD. Residues 136-139 form a G4 region; that stretch reads NKVD. The G5 stretch occupies residues 173–175; sequence SAL.

The protein belongs to the TRAFAC class translation factor GTPase superfamily. Classic translation factor GTPase family. EF-Tu/EF-1A subfamily. As to quaternary structure, monomer.

The protein localises to the cytoplasm. It catalyses the reaction GTP + H2O = GDP + phosphate + H(+). Its function is as follows. GTP hydrolase that promotes the GTP-dependent binding of aminoacyl-tRNA to the A-site of ribosomes during protein biosynthesis. The protein is Elongation factor Tu of Chloroherpeton thalassium (strain ATCC 35110 / GB-78).